The following is a 454-amino-acid chain: MLIYNTLTRRLQEFNEMHRGRVNLFVCGPTVQDHFHIGHARTYIFFDAVAKFLKLEGYSVFYLQNITDIDDKIINRAKEMGIEPSEVAKIYFSEFQEDMKRLKVDSVNFFARATLYIDEIVSQISRMMEKGYAYETDDGVYFEVRKFKDYGELSNQSLDQIIAGYRVAVNENKRNPEDFVLWKKKKAGEPSWPSPWGEGRPGWHIEDTAITETYFGDEYDIHGGGSDLIFPHHEAEIAQMRSISGKRYLAHYWIHTGMININKEKMSKSLKNFITIRDILKDYRPEDLRFAILNANYRTQIEFSKELMEESKKLIDYINDTYRKLEYVNGSGNFKIDVNSVISEMRSLAENDFDFHSVIVKLLAITGEINRNFEGINKEVAEELKKVYLWVDTFLGILEQKKEVSKGIVDDLVELRTRMRKEKNFLISDAIRDVLKKNGIHIEDRGDVTVWWQE.

Cysteine 27 is a binding site for Zn(2+). Residues 29–39 (PTVQDHFHIGH) carry the 'HIGH' region motif. Aspartate 207, histidine 232, and glutamate 236 together coordinate Zn(2+). The 'KMSKS' region motif lies at 265–269 (KMSKS). Residue lysine 268 participates in ATP binding.

This sequence belongs to the class-I aminoacyl-tRNA synthetase family. Zn(2+) serves as cofactor.

The protein resides in the cytoplasm. The catalysed reaction is tRNA(Cys) + L-cysteine + ATP = L-cysteinyl-tRNA(Cys) + AMP + diphosphate. This Thermoplasma volcanium (strain ATCC 51530 / DSM 4299 / JCM 9571 / NBRC 15438 / GSS1) protein is Cysteine--tRNA ligase.